The following is a 286-amino-acid chain: MSQTNANDLRNNEVFFISPSNNTNKVLDKISQSEVKLWNKLSGANQKWRLIYDTNKQAYKIKVMDNTSLILTWNAPLSSVSVKTDTNGDNQYWYLLQNYISRNVIIRNYMNPNLVLQYNIDDTLMVSTQTSSSNQFFKFSNCIYEALNNRNCKLQTQLNSDRFLSKNLNSQIIVLWQWFDSSRQKWIIEYNETKSAYTLKCQENNRYLTWIQNSNNYVETYQSTDSLIQYWNINYLDNDASKYILYNLQDTNRVLDVYNSQIANGTHVIVDSYHGNTNQQWIINLI.

Residues 2 to 55 form a 1-alpha repeat; the sequence is SQTNANDLRNNEVFFISPSNNTNKVLDKISQSEVKLWNKLSGANQKWRLIYDTN. Ricin B-type lectin domains are found at residues 12–140 and 180–284; these read NEVF…FKFS and DSSR…WIIN. A 1-beta repeat occupies 56–100; the sequence is KQAYKIKVMDNTSLILTWNAPLSSVSVKTDTNGDNQYWYLLQNYI. Residues 101–148 form a 1-gamma repeat; it reads SRNVIIRNYMNPNLVLQYNIDDTLMVSTQTSSSNQFFKFSNCIYEALN. A 2-alpha repeat occupies 149 to 193; the sequence is NRNCKLQTQLNSDRFLSKNLNSQIIVLWQWFDSSRQKWIIEYNET. Positions 167–183 are sugar-binding site 1; the sequence is NLNSQIIVLWQWFDSSR. A 2-beta repeat occupies 194 to 239; that stretch reads KSAYTLKCQENNRYLTWIQNSNNYVETYQSTDSLIQYWNINYLDND. The 2-gamma repeat unit spans residues 240–286; the sequence is ASKYILYNLQDTNRVLDVYNSQIANGTHVIVDSYHGNTNQQWIINLI. The interval 256-279 is sugar-binding site 2; it reads DVYNSQIANGTHVIVDSYHGNTNQ.

In terms of assembly, botulinum toxins are produced as progenitor toxins of large molecular sizes of 12S (M toxin) and 16S (L toxin). M toxin consists of a non-toxic, non-hemagglutinin component (NTNHA) and the neurotoxin. L toxin consists of the M toxin and the 3 subcomponents of hemagglutinin (HA). HA is composed of subcomponents of 70, 33, and 17 kDa. The 70 kDa subcomponent undergoes proteolytic processing and is split into HA-55 (also called HA-53 and HA3b) and HA-22-23 (also called HA3a). The stoichiometry of the whole complex has been modeled as one BoNT/C, one NTNHA, three HA-70, six HA-33 and three HA-17.

It localises to the secreted. In terms of biological role, agglutinates human erythrocytes. The hemagglutinin (HA) component of the progenitor toxin protects the structural integrity of botulinum neurotoxin; may increase internalization of the neurotoxin into the bloodstream of the host. The hemagglutinin (HA) component is involved in binding to the upper small intestine through interactions with glycolipids and glycoproteins containing sialic acid moieties. Binds galactose or oligosaccharides with galactose at their non-reducing end. Binds eukaryotic host mucins; binding is inhibited by N-acetyl-beta-neuraminic acid, N-acetyl-D-galactosamine, galactose, and methyl N-acetyl-beta-neuraminic acid. Binds N-acetyl-beta-neuraminic acid, N-acetyl-D-galactosamine and galactose (but not glucose) via 2 sites. The polypeptide is Main hemagglutinin component type C (Clostridium botulinum C (Clostridium botulinum C bacteriophage)).